An 877-amino-acid polypeptide reads, in one-letter code: G-protein coupled receptor family C group 6 member A (877 aa).

The first 24 residues, 1–24 (MAGLDLSLVLMLSVLAGVREVSLT), serve as a signal peptide directing secretion. Residues 25 to 567 (QVNQQGVIAP…EYFEWNSGFA (543 aa)) are Extracellular-facing. N-linked (GlcNAc...) asparagine glycosylation is found at N53, N99, N135, N263, N310, N322, N338, and N358. Position 388 (D388) interacts with L-lysine. N-linked (GlcNAc...) asparagine glycosylation is found at N430, N475, N484, N528, and N548. The chain crosses the membrane as a helical span at residues 568–588 (IALLTLAALGILLLISMSALF). Topologically, residues 589 to 603 (FWQRNSLVVKAAGGP) are cytoplasmic. Residues 604-624 (LCHLILFSLLGSFISVIFFVG) form a helical membrane-spanning segment. The Extracellular segment spans residues 625 to 635 (EPSNESCRVRQ). Residue N628 is glycosylated (N-linked (GlcNAc...) asparagine). A helical transmembrane segment spans residues 636–656 (VIFGLSFTLCVSCILVKSLKI). The Cytoplasmic portion of the chain corresponds to 657–676 (LLAFQMNLELKELLRKLYKP). Residues 677–697 (YVIVCMCMGLQVTICTLWLTL) traverse the membrane as a helical segment. Residues 698-720 (HRPFIEKVVQPKSILLECNEGSD) lie on the Extracellular side of the membrane. Residues 721 to 741 (LMFGLMLGYIVLLALICFTFA) form a helical membrane-spanning segment. The Cytoplasmic portion of the chain corresponds to 742–755 (YKGRKLPQKYNEAK). A helical membrane pass occupies residues 756–776 (FITFGMLIYLMAWVIFIPVHV). The Extracellular portion of the chain corresponds to 777–782 (TTSGKY). Residues 783–803 (VPAVEVVVILISNYGILSCHF) form a helical membrane-spanning segment. The Cytoplasmic segment spans residues 804–877 (LPKCYIIIFK…VSVPEIDNVL (74 aa)).

It belongs to the G-protein coupled receptor 3 family. Homodimer; disulfide-linked. In terms of tissue distribution, expressed in olfactory epithelium. Also expressed in gills, tongue, lips and palatal organ. Not expressed in brain, kidney, liver, muscle, intestine, ovary and skin. In olfactory epithelium, it is widely expressed over the apical and medial portions of the olfactory sensory neurons, regions that contain olfactory neurons. Expressed in external epithelia, which contains taste buds and solitary chemosensory cells. On gill rakers, it is widely expressed in the surface epithelium, but excluded from taste buds.

It localises to the cell membrane. Its function is as follows. Olfactory receptor that is activated by amino acids that act as potent odorants in fish. Most highly activated by basic amino acids such as L-lysine and L-arginine. The protein is G-protein coupled receptor family C group 6 member A (gprc6a) of Carassius auratus (Goldfish).